Here is a 503-residue protein sequence, read N- to C-terminus: GMP synthase [glutamine-hydrolyzing] (503 aa).

One can recognise a Glutamine amidotransferase type-1 domain in the interval 1 to 189; that stretch reads MVLVLDFGSQ…FLELAGVKRD (189 aa). Cys78 (nucleophile) is an active-site residue. Residues His164 and Glu166 contribute to the active site. Residues 190-378 enclose the GMPS ATP-PPase domain; it reads WTPEHVLEEL…LGLPDTLRLR (189 aa). 217–223 lines the ATP pocket; the sequence is SGGVDSS.

Homodimer.

It catalyses the reaction XMP + L-glutamine + ATP + H2O = GMP + L-glutamate + AMP + diphosphate + 2 H(+). It functions in the pathway purine metabolism; GMP biosynthesis; GMP from XMP (L-Gln route): step 1/1. Catalyzes the synthesis of GMP from XMP. This is GMP synthase [glutamine-hydrolyzing] from Thermus thermophilus (strain ATCC 27634 / DSM 579 / HB8).